Consider the following 96-residue polypeptide: RxLR effector protein PITG_11507 (96 aa).

The first 19 residues, 1-19, serve as a signal peptide directing secretion; sequence MRLSFIIVAVSLLAGGSGA. A disordered region spans residues 27 to 59; sequence SDVLTSRGTNEGARTGKRSLRYDSNVERTGEED. The RxLR-dEER motif lies at 44 to 59; it reads RSLRYDSNVERTGEED. A compositionally biased stretch (basic and acidic residues) spans 46–55; sequence LRYDSNVERT.

It belongs to the RxLR effector family.

The protein localises to the secreted. The protein resides in the host nucleus. It is found in the host cytoplasm. Its function is as follows. Effector that enhances P.infestans colonization of Nicotiana benthamiana leaves. The polypeptide is RxLR effector protein PITG_11507 (Phytophthora infestans (strain T30-4) (Potato late blight agent)).